Here is a 45-residue protein sequence, read N- to C-terminus: Rubredoxin-1 (45 aa).

Methionine 1 carries the post-translational modification N-formylmethionine. Residues 1–45 enclose the Rubredoxin-like domain; the sequence is MQKYVCNVCGYEYDPAEHDNVPFDQLPDDWCCPVCGVSKDQFSPA. 4 residues coordinate Fe cation: cysteine 6, cysteine 9, cysteine 32, and cysteine 35.

It belongs to the rubredoxin family. Requires Fe(3+) as cofactor.

The protein resides in the cytoplasm. In terms of biological role, rubredoxin is a small nonheme, iron protein lacking acid-labile sulfide. Its single Fe, chelated to 4 Cys, functions as an electron acceptor and may also stabilize the conformation of the molecule. Its function is as follows. Electron acceptor for cytoplasmic lactate dehydrogenase. This chain is Rubredoxin-1 (rd1), found in Desulfovibrio desulfuricans (strain ATCC 27774 / DSM 6949 / MB).